The chain runs to 100 residues: Urease subunit gamma (100 aa).

Belongs to the urease gamma subunit family. Heterotrimer of UreA (gamma), UreB (beta) and UreC (alpha) subunits. Three heterotrimers associate to form the active enzyme.

The protein resides in the cytoplasm. The enzyme catalyses urea + 2 H2O + H(+) = hydrogencarbonate + 2 NH4(+). The protein operates within nitrogen metabolism; urea degradation; CO(2) and NH(3) from urea (urease route): step 1/1. The protein is Urease subunit gamma of Nostoc punctiforme (strain ATCC 29133 / PCC 73102).